The chain runs to 354 residues: Uroporphyrinogen decarboxylase (354 aa).

Substrate is bound by residues 27 to 31 (RQAGR), F46, D77, Y154, T209, and H327.

The protein belongs to the uroporphyrinogen decarboxylase family. In terms of assembly, homodimer.

Its subcellular location is the cytoplasm. The catalysed reaction is uroporphyrinogen III + 4 H(+) = coproporphyrinogen III + 4 CO2. The protein operates within porphyrin-containing compound metabolism; protoporphyrin-IX biosynthesis; coproporphyrinogen-III from 5-aminolevulinate: step 4/4. Its function is as follows. Catalyzes the decarboxylation of four acetate groups of uroporphyrinogen-III to yield coproporphyrinogen-III. In Photorhabdus laumondii subsp. laumondii (strain DSM 15139 / CIP 105565 / TT01) (Photorhabdus luminescens subsp. laumondii), this protein is Uroporphyrinogen decarboxylase.